A 143-amino-acid polypeptide reads, in one-letter code: Hemoglobin subunit alpha-1 (143 aa).

Serine 2 is subject to N-acetylserine. The Globin domain occupies 2-143 (SLTEKDKAAV…VSLALAERYR (142 aa)). Histidine 60 is an O2 binding site. Position 89 (histidine 89) interacts with heme b.

Belongs to the globin family. As to quaternary structure, hb 1 is a heterotetramer of two alpha-1 and two beta chains. As to expression, red blood cells.

Involved in oxygen transport from gills to the various peripheral tissues. The chain is Hemoglobin subunit alpha-1 (hba1) from Cottoperca gobio (Frogmouth).